The chain runs to 210 residues: Redox-sensing transcriptional repressor Rex (210 aa).

The segment at residues 17-56 is a DNA-binding region (H-T-H motif); sequence KYHRYLYELLKNDVDRISSKELSEKIGFTASQIRQDLNCF. Position 91 to 96 (91 to 96) interacts with NAD(+); the sequence is GAGNIG.

It belongs to the transcriptional regulatory Rex family. As to quaternary structure, homodimer.

Its subcellular location is the cytoplasm. Functionally, modulates transcription in response to changes in cellular NADH/NAD(+) redox state. The chain is Redox-sensing transcriptional repressor Rex from Clostridium botulinum (strain ATCC 19397 / Type A).